Consider the following 215-residue polypeptide: MOB kinase activator-like 1A (215 aa).

The interval 1–27 is disordered; sequence MSLFGLGRNQKTFRPKKSAPSGSKGAQ. Zn(2+)-binding residues include Cys79, Cys84, His161, and His166.

The protein belongs to the MOB1/phocein family. In terms of assembly, interacts with SIK1 at the plasma membrane and in the nucleus. Constitutively expressed. In 3- to 4-day-old seedlings, expression is high in the shoot apical meristem and along the vasculature in cotyledons, hypocotyls and roots. At the root tip, expression is detected in columella and lateral root cap cells as well as in the stem cell niche around the quiescent center (QC). The levels of expression decrease progressively in the meristematic zone from the root tip towards the base of the root, becoming stronger again in the elongation zone. In flowers, expression appears localized in ovules and pollen.

It is found in the nucleus. It localises to the cell membrane. Its subcellular location is the vacuole membrane. Its function is as follows. Plays a key role in regulation of cell expansion and cell division. Required for proper plant development, the correct patterning of the root meristem and the control of root growth. Involved in both sporogenesis and gametogenesis. The sequence is that of MOB kinase activator-like 1A from Arabidopsis thaliana (Mouse-ear cress).